We begin with the raw amino-acid sequence, 243 residues long: Carboxy-S-adenosyl-L-methionine synthase (243 aa).

Residues Tyr-40, 65–67, 90–91, 118–119, Asn-133, and Arg-200 each bind S-adenosyl-L-methionine; these read GCS, DN, and DI.

This sequence belongs to the class I-like SAM-binding methyltransferase superfamily. Cx-SAM synthase family. As to quaternary structure, homodimer.

The enzyme catalyses prephenate + S-adenosyl-L-methionine = carboxy-S-adenosyl-L-methionine + 3-phenylpyruvate + H2O. In terms of biological role, catalyzes the conversion of S-adenosyl-L-methionine (SAM) to carboxy-S-adenosyl-L-methionine (Cx-SAM). In Shewanella baltica (strain OS223), this protein is Carboxy-S-adenosyl-L-methionine synthase.